The primary structure comprises 105 residues: Large ribosomal subunit protein uL24 (105 aa).

Belongs to the universal ribosomal protein uL24 family. Part of the 50S ribosomal subunit.

Its function is as follows. One of two assembly initiator proteins, it binds directly to the 5'-end of the 23S rRNA, where it nucleates assembly of the 50S subunit. In terms of biological role, one of the proteins that surrounds the polypeptide exit tunnel on the outside of the subunit. In Xanthomonas axonopodis pv. citri (strain 306), this protein is Large ribosomal subunit protein uL24.